A 148-amino-acid polypeptide reads, in one-letter code: MNVSRLEELISMNPFSDMENIVINEKEKCILGNRCFVKLSEVYNMPMCCIDTNQCLTMNRFKFSLNELLYTPFYYKQLQYQYLTPQFIFRCIQEANENNMSCYYCYTKKKEHNGLNIDIFIPTANSKSYIVIGLRIKDFWKQSFKVNK.

It belongs to the poxviridae F15 protein family.

This Fowlpox virus (strain NVSL) (FPV) protein is Protein F15.